Consider the following 420-residue polypeptide: Gamma-glutamyl phosphate reductase (420 aa).

This sequence belongs to the gamma-glutamyl phosphate reductase family.

Its subcellular location is the cytoplasm. The enzyme catalyses L-glutamate 5-semialdehyde + phosphate + NADP(+) = L-glutamyl 5-phosphate + NADPH + H(+). The protein operates within amino-acid biosynthesis; L-proline biosynthesis; L-glutamate 5-semialdehyde from L-glutamate: step 2/2. In terms of biological role, catalyzes the NADPH-dependent reduction of L-glutamate 5-phosphate into L-glutamate 5-semialdehyde and phosphate. The product spontaneously undergoes cyclization to form 1-pyrroline-5-carboxylate. This Streptococcus pneumoniae serotype 2 (strain D39 / NCTC 7466) protein is Gamma-glutamyl phosphate reductase.